Consider the following 143-residue polypeptide: Small ribosomal subunit protein uS12B (143 aa).

Proline 62 is subject to 3,4-dihydroxyproline.

This sequence belongs to the universal ribosomal protein uS12 family. As to quaternary structure, component of the small ribosomal subunit (SSU). Mature yeast ribosomes consist of a small (40S) and a large (60S) subunit. The 40S small subunit contains 1 molecule of ribosomal RNA (18S rRNA) and at least 33 different proteins. The large 60S subunit contains 3 rRNA molecules (25S, 5.8S and 5S rRNA) and at least 46 different proteins. In terms of processing, hydroxylation at Pro-62 affects translation termination efficiency.

The protein resides in the cytoplasm. It is found in the nucleus. It localises to the nucleolus. Component of the ribosome, a large ribonucleoprotein complex responsible for the synthesis of proteins in the cell. The small ribosomal subunit (SSU) binds messenger RNAs (mRNAs) and translates the encoded message by selecting cognate aminoacyl-transfer RNA (tRNA) molecules. The large subunit (LSU) contains the ribosomal catalytic site termed the peptidyl transferase center (PTC), which catalyzes the formation of peptide bonds, thereby polymerizing the amino acids delivered by tRNAs into a polypeptide chain. The nascent polypeptides leave the ribosome through a tunnel in the LSU and interact with protein factors that function in enzymatic processing, targeting, and the membrane insertion of nascent chains at the exit of the ribosomal tunnel. This chain is Small ribosomal subunit protein uS12B (rps2302), found in Schizosaccharomyces pombe (strain 972 / ATCC 24843) (Fission yeast).